A 284-amino-acid polypeptide reads, in one-letter code: Shikimate kinase (284 aa).

Residue proline 85–alanine 95 coordinates ATP.

Belongs to the GHMP kinase family. Archaeal shikimate kinase subfamily.

It is found in the cytoplasm. The enzyme catalyses shikimate + ATP = 3-phosphoshikimate + ADP + H(+). The protein operates within metabolic intermediate biosynthesis; chorismate biosynthesis; chorismate from D-erythrose 4-phosphate and phosphoenolpyruvate: step 5/7. The protein is Shikimate kinase of Halobacterium salinarum (strain ATCC 29341 / DSM 671 / R1).